Here is a 101-residue protein sequence, read N- to C-terminus: Ascorbate-specific PTS system EIIB component (101 aa).

The PTS EIIB type-2 domain maps to 3–96; that stretch reads VRILAVCGNG…KLLEVIKAHF (94 aa). The Phosphocysteine intermediate role is filled by Cys-9. Cys-9 bears the Phosphocysteine mark.

The protein localises to the cytoplasm. The enzyme catalyses N(pros)-phospho-L-histidyl-[protein] + L-ascorbate(out) = L-ascorbate 6-phosphate(in) + L-histidyl-[protein]. The phosphoenolpyruvate-dependent sugar phosphotransferase system (sugar PTS), a major carbohydrate active transport system, catalyzes the phosphorylation of incoming sugar substrates concomitantly with their translocation across the cell membrane. The enzyme II UlaABC PTS system is involved in ascorbate transport. The sequence is that of Ascorbate-specific PTS system EIIB component (ulaB) from Shigella sonnei (strain Ss046).